The chain runs to 119 residues: Large ribosomal subunit protein bL20 (119 aa).

Belongs to the bacterial ribosomal protein bL20 family.

Its function is as follows. Binds directly to 23S ribosomal RNA and is necessary for the in vitro assembly process of the 50S ribosomal subunit. It is not involved in the protein synthesizing functions of that subunit. The polypeptide is Large ribosomal subunit protein bL20 (Alkaliphilus oremlandii (strain OhILAs) (Clostridium oremlandii (strain OhILAs))).